Consider the following 291-residue polypeptide: Putative ribosomal protein uL16-like, mitochondrial (291 aa).

A mitochondrion-targeting transit peptide spans 1–27 (MQRFMFSRVVEHQRQISRGFLSLVPSL). Residues 127-137 (VHETSNNEKKQ) show a composition bias toward basic and acidic residues. Residues 127-173 (VHETSNNEKKQQKQKSSVNEKKPKKKKKSSISDIPRRTKFQKHHRGR) are disordered. Residues 163–173 (RTKFQKHHRGR) show a composition bias toward basic residues.

This sequence belongs to the universal ribosomal protein uL16 family.

It localises to the mitochondrion. Functionally, could be a component of the large subunit of mitochondrial ribosome. This Arabidopsis thaliana (Mouse-ear cress) protein is Putative ribosomal protein uL16-like, mitochondrial.